The chain runs to 897 residues: High molecular weight rhoptry protein 3 (897 aa).

A signal peptide spans 1 to 24 (MRSKHLVTLFIITFLSFSTVKVWG). Cystine bridges form between Cys-157-Cys-231, Cys-244-Cys-253, Cys-262-Cys-276, Cys-421-Cys-620, and Cys-475-Cys-536. Residues 597-615 (FVLYFISIISVLYINEYYY) traverse the membrane as a helical segment. Disordered stretches follow at residues 788–845 (KEQS…SNLK) and 859–897 (QLDKEKPKKKKSKRKKKRDSSSDRILLEESKTFTSENEL). The segment covering 792-801 (KSTSAASTSD) has biased composition (polar residues). The span at 802-817 (EISGSEGPSTESTSTG) shows a compositional bias: low complexity. Position 804 is a phosphoserine; by CDPK1 (Ser-804). Residues 820–832 (GEDKTTDNTYKEM) are compositionally biased toward basic and acidic residues. Over residues 865-876 (PKKKKSKRKKKR) the composition is skewed to basic residues. Residues 877–889 (DSSSDRILLEESK) are compositionally biased toward basic and acidic residues.

As to quaternary structure, component of the RhopH complex. RhopH complex is composed of CLAG3.1/CLAG3.2, RhopH2 and RhopH3 with a 1:1:1 subunit stoichiometry. Interacts with CLAG3.1/CLAG3.2. Interacts with CDPK1; the interaction promotes RhopH3 phosphorylation in merozoites. Post-translationally, proteolytically cleaved near C-terminus.

The protein resides in the host cell membrane. Its subcellular location is the parasitophorous vacuole membrane. It is found in the cytoplasm. It localises to the cytoplasmic vesicle. The protein localises to the secretory vesicle. The protein resides in the rhoptry. Functionally, participates in the formation of new permeability pathways in Plasmodium-infected erythrocytes enabling the uptake of nutrients from the blood plasma. Required for maintaining invasion capacity of merozoites. Required for the trophozoite to schizont developmental transition of the intracellular parasite. This is High molecular weight rhoptry protein 3 from Plasmodium falciparum (isolate 3D7).